We begin with the raw amino-acid sequence, 959 residues long: Glycine dehydrogenase (decarboxylating) (959 aa).

Lysine 708 is modified (N6-(pyridoxal phosphate)lysine).

This sequence belongs to the GcvP family. The glycine cleavage system is composed of four proteins: P, T, L and H. Pyridoxal 5'-phosphate serves as cofactor.

The catalysed reaction is N(6)-[(R)-lipoyl]-L-lysyl-[glycine-cleavage complex H protein] + glycine + H(+) = N(6)-[(R)-S(8)-aminomethyldihydrolipoyl]-L-lysyl-[glycine-cleavage complex H protein] + CO2. Functionally, the glycine cleavage system catalyzes the degradation of glycine. The P protein binds the alpha-amino group of glycine through its pyridoxal phosphate cofactor; CO(2) is released and the remaining methylamine moiety is then transferred to the lipoamide cofactor of the H protein. The sequence is that of Glycine dehydrogenase (decarboxylating) from Yersinia pseudotuberculosis serotype O:1b (strain IP 31758).